The following is a 101-amino-acid chain: NAD(P)H-quinone oxidoreductase subunit 4L, chloroplastic (101 aa).

A run of 3 helical transmembrane segments spans residues 2-22 (MFEL…YGLI), 32-52 (ICLE…SDLF), and 61-81 (IFAI…LSIL).

It belongs to the complex I subunit 4L family. As to quaternary structure, NDH is composed of at least 16 different subunits, 5 of which are encoded in the nucleus.

It localises to the plastid. Its subcellular location is the chloroplast thylakoid membrane. The catalysed reaction is a plastoquinone + NADH + (n+1) H(+)(in) = a plastoquinol + NAD(+) + n H(+)(out). It catalyses the reaction a plastoquinone + NADPH + (n+1) H(+)(in) = a plastoquinol + NADP(+) + n H(+)(out). NDH shuttles electrons from NAD(P)H:plastoquinone, via FMN and iron-sulfur (Fe-S) centers, to quinones in the photosynthetic chain and possibly in a chloroplast respiratory chain. The immediate electron acceptor for the enzyme in this species is believed to be plastoquinone. Couples the redox reaction to proton translocation, and thus conserves the redox energy in a proton gradient. In Lolium perenne (Perennial ryegrass), this protein is NAD(P)H-quinone oxidoreductase subunit 4L, chloroplastic.